A 216-amino-acid polypeptide reads, in one-letter code: Large ribosomal subunit protein bL25 (216 aa).

Disordered regions lie at residues 1 to 21 (MAET…GAVR) and 192 to 216 (SADN…GKED). Residues 195 to 216 (NEAKTEEAGEDKSEEKSSGKED) are compositionally biased toward basic and acidic residues.

The protein belongs to the bacterial ribosomal protein bL25 family. CTC subfamily. As to quaternary structure, part of the 50S ribosomal subunit; part of the 5S rRNA/L5/L18/L25 subcomplex. Contacts the 5S rRNA. Binds to the 5S rRNA independently of L5 and L18.

Its function is as follows. This is one of the proteins that binds to the 5S RNA in the ribosome where it forms part of the central protuberance. This Parvibaculum lavamentivorans (strain DS-1 / DSM 13023 / NCIMB 13966) protein is Large ribosomal subunit protein bL25.